The primary structure comprises 348 residues: Dihydroorotase (348 aa).

Residues His14 and His16 each coordinate Zn(2+). Substrate is bound by residues 16-18 (HLR) and Asn42. Zn(2+)-binding residues include Lys100, His137, and His175. The residue at position 100 (Lys100) is an N6-carboxylysine. His137 provides a ligand contact to substrate. Residue Leu220 coordinates substrate. Asp248 contributes to the Zn(2+) binding site. Residue Asp248 is part of the active site. Positions 252 and 264 each coordinate substrate.

Belongs to the metallo-dependent hydrolases superfamily. DHOase family. Class II DHOase subfamily. As to quaternary structure, homodimer. Requires Zn(2+) as cofactor.

It catalyses the reaction (S)-dihydroorotate + H2O = N-carbamoyl-L-aspartate + H(+). It participates in pyrimidine metabolism; UMP biosynthesis via de novo pathway; (S)-dihydroorotate from bicarbonate: step 3/3. Catalyzes the reversible cyclization of carbamoyl aspartate to dihydroorotate. This Pseudomonas putida (strain ATCC 700007 / DSM 6899 / JCM 31910 / BCRC 17059 / LMG 24140 / F1) protein is Dihydroorotase.